The following is a 345-amino-acid chain: N-malonyltransferase FDB2 (345 aa).

The Acyl-thioester intermediate role is filled by C110. The active-site Proton acceptor is H158. D173 is an active-site residue.

Belongs to the arylamine N-acetyltransferase family.

Its pathway is xenobiotic degradation. N-malonyltransferase; part of the Fusarium detoxification of benzoxazolinone cluster 2 (FDB2) involved in the degradation of benzoxazolinones produced by the host plant. Maize, wheat, and rye produce the 2 benzoxazinone phytoanticipins 2,4-dihy-droxy-7-methoxy-1,4-benzoxazin-3-one (DIMBOA) and 2,4-dihydroxy-1,4-benzoxazin-3-one (DIBOA) that, due to their inherent instability once released, spontaneously degrade to the more stable corresponding benzoxazolinones, 6-methoxy-2-benzoxazolinone (MBOA) and 2-benzoxazolinone (BOA), respectively. The first step in the detoxification of benzoxazolinones involves the hydrolysis of the cyclic ester bond of benzoxazolinones by the FDB1 cluster gamma-lactamase MBL1 to aminophenols. MBL1 is able to convert BOA into 2-aminophenol (2-AP), as well as MBOA into 5-methoxy-2-aminophenol (2-AMP). The FDB2 cluster N-malonyltransferase FDB2/NAT1 then metabolizes aminophenols via N-malonylation to non-toxic malonamic acids. FDB2/NAT1 converts 2-AP into N-(2-hydroxyphenyl) malonamic acid (HPMA) and 2-AMP into N-(2-hydroxy-4-methoxyphenyl) malonamic acid (HMPMA). The duplicated dienlactone hydrolases DLH1 and DLH2 may provide redundant function for hydrolyzing the lactone moiety in the BOA molecule. The roles of the amidases an other enzymes encoded by the 2 FDB clusters have not been identified so far. In Gibberella moniliformis (strain M3125 / FGSC 7600) (Maize ear and stalk rot fungus), this protein is N-malonyltransferase FDB2.